An 858-amino-acid chain; its full sequence is Elongation factor 2 (858 aa).

The tr-type G domain maps to 17-362 (ANIRNMSVIA…MITIHLPSPV (346 aa)). GTP contacts are provided by residues 26–33 (AHVDHGKS), 158–161 (NKMD), and 216–218 (SGL). Position 715 is a diphthamide (H715).

This sequence belongs to the TRAFAC class translation factor GTPase superfamily. Classic translation factor GTPase family. EF-G/EF-2 subfamily. In terms of assembly, binds to 80S ribosomes. Actively translating ribosomes show mutually exclusive binding of eIF5a (EIF5A or EIF5A2) and EEF2/eEF2. Interacts with serbp1; interaction sequesters eef2/eEF2 at the A-site of the ribosome, thereby blocking the interaction sites of the mRNA-tRNA complex, promoting ribosome stabilization and hibernation. Interacts with habp4; interaction takes place at the A-site of hibernating ribosomes and promotes ribosome stabilization.

The protein resides in the cytoplasm. It is found in the nucleus. It catalyses the reaction GTP + H2O = GDP + phosphate + H(+). Functionally, catalyzes the GTP-dependent ribosomal translocation step during translation elongation. During this step, the ribosome changes from the pre-translocational (PRE) to the post-translocational (POST) state as the newly formed A-site-bound peptidyl-tRNA and P-site-bound deacylated tRNA move to the P and E sites, respectively. Catalyzes the coordinated movement of the two tRNA molecules, the mRNA and conformational changes in the ribosome. This chain is Elongation factor 2, found in Xenopus laevis (African clawed frog).